A 389-amino-acid chain; its full sequence is MEANGYRITHSADGPATILAIGTANPTNVVDQNAYPDFYFRVTNSEYLQELKAKFRRICEKAAIRKRHLYLTEEILRENPSLLAPMAPSFDARQAIVVEAVPKLAKEAAEKAIKEWGRPKSDITHLVFCSASGIDMPGSDLQLLKLLGLPPSVNRVMLYNVGCHAGGTALRVAKDLAENNRGARVLAVCSEVTVLSYRGPHPAHIESLFVQALFGDGAAALVVGSDPVDGVERPIFEIASASQVMLPESAEAVGGHLREIGLTFHLKSQLPSIIASNIEQSLTTACSPLGLSDWNQLFWAVHPGGRAILDQVEARLGLEKDRLAATRHVLSEYGNMQSATVLFILDEMRNRSAAEGHATTGEGLDWGVLLGFGPGLSIETVVLHSCRLN.

The active site involves cysteine 163.

This sequence belongs to the thiolase-like superfamily. Chalcone/stilbene synthases family. Homodimer. In terms of tissue distribution, expressed in both the leaf and rhizome, with higher expression in the rhizome.

It catalyses the reaction (E)-feruloyl-CoA + malonyl-CoA + H(+) = (E)-feruloylacetyl-CoA + CO2 + CoA. The enzyme catalyses 4-coumaroyl-CoA + malonyl-CoA + H(+) = (4-coumaroyl)acetyl-CoA + CO2 + CoA. The protein operates within secondary metabolite biosynthesis; flavonoid biosynthesis. In terms of biological role, catalyzes the formation of feruloyldiketide-CoA by condensing feruloyl-CoA and malonyl-CoA in the curcuminoid biosynthesis. Has no activity with cinnamoyl-CoA. This is Phenylpropanoylacetyl-CoA synthase (DCS) from Curcuma longa (Turmeric).